The sequence spans 259 residues: Light-harvesting complex stress-related protein 3.1, chloroplastic (259 aa).

A chloroplast-targeting transit peptide spans 1–45 (MLANVVSRKASGLRQTPARATVAVKSVSGRRTTAAEPQTAAPVAA). Position 51 (Y51) interacts with chlorophyll b. Chlorophyll a contacts are provided by F66, E87, and H90. R92 is a binding site for chlorophyll b. The chain crosses the membrane as a helical span at residues 93 to 113 (VAMLAALGFVVGEQLQDFPLF). Q130 provides a ligand contact to chlorophyll a. A helical transmembrane segment spans residues 137-157 (EPLLIAIGVAESYRVAVGWAT). The chlorophyll b site is built by E147 and R150. Chlorophyll a is bound by residues K196, E197, N200, R202, and Q214. The chain crosses the membrane as a helical span at residues 203-223 (LAMIAIAAFVAQELVEQTEIF).

This sequence belongs to the light-harvesting chlorophyll a/b-binding (LHC) protein family. Interacts with the photosystem II-light-harvesting complex II (PSII-LHCII) supercomplex to form PSII-LHCII-LHCSR3 supercomplex.

The protein localises to the plastid. The protein resides in the chloroplast thylakoid membrane. Required for non-photochemical quenching (NPQ), a mechanism that converts and dissipates the harmful excess absorbed light energy into heat and protect the photosynthetic apparatus from photo-oxidative damage. NPQ includes dissipating excess light energy to heat (qE) and the reversible coupling of LHCII to photosystems (state transitions or qT), which are considered separate NPQ mechanisms. Is responsible for most of the excess light energy to heat dissipation (qE), also known as energy-dependent chlorophyll fluorescence quenching activity of chlorophyll excited states. Involved in a de-coupling and re-coupling of energy transfer to photosystem II (PSII) during qT. Binds chlorophyll a and b. Is able to sense luminal acidification of the thylakoid membranes, which occurs along with elevated electron flow caused by excess light. Establishes interactions with photosystem II (PSII) antenna components upon lumen acidification, and protonation of lumen-exposed, negatively charged residues both in LHCSR3 and in PSII antenna components. Mediates excitation energy transfer from light-harvesting complex II (LHCII) to photosystem I (PSI), rather than photosystem II (PSII), at low pH, which mimics the acidified lumen of the thylakoid membranes in high light-exposed chloroplasts. Activates PSI-dependent fluorescence quenching in addition to dissipating excitation energy in LHCII to avoid photooxidative stress under excess light. Contributes with PGRL1 to the regulation of electron flow upstream of photosystem I (PSI), and limits the accumulation of electrons on the PSI acceptor side, thus avoiding PSI photoinhibition. This is Light-harvesting complex stress-related protein 3.1, chloroplastic from Chlamydomonas reinhardtii (Chlamydomonas smithii).